A 269-amino-acid chain; its full sequence is uncharacterized protein (269 aa).

Residues 181–191 are compositionally biased toward basic and acidic residues; sequence QKKELSPHEIA. The segment at 181–203 is disordered; sequence QKKELSPHEIAESPSSHSTSPMG. Residues 193 to 202 show a composition bias toward polar residues; sequence SPSSHSTSPM. Phosphoserine is present on S200.

This is an uncharacterized protein from Schizosaccharomyces pombe (strain 972 / ATCC 24843) (Fission yeast).